Here is a 121-residue protein sequence, read N- to C-terminus: Phosphoribosyl-ATP pyrophosphatase (121 aa).

This sequence belongs to the PRA-PH family.

It localises to the cytoplasm. The catalysed reaction is 1-(5-phospho-beta-D-ribosyl)-ATP + H2O = 1-(5-phospho-beta-D-ribosyl)-5'-AMP + diphosphate + H(+). Its pathway is amino-acid biosynthesis; L-histidine biosynthesis; L-histidine from 5-phospho-alpha-D-ribose 1-diphosphate: step 2/9. This is Phosphoribosyl-ATP pyrophosphatase from Nitrosospira multiformis (strain ATCC 25196 / NCIMB 11849 / C 71).